A 528-amino-acid chain; its full sequence is MADDSASPSPSSASPLQHHREALKSSVRNTAASRRREQAIAIGKERREALIRAKRVCRAPISGSDEAEMEEGDMVVDEEKACLEAKTAHAVEELKSALSIQGKGVQKKKIEALRDLRRLLSQPEVPLVDTAIKAGAVPLLVQYLSFGSSDEQLLEAAWCLTNIAAGEPEETKSLLPALPLLIAHLGEKSSTLVAEQCAWAIGNVAGEGAELRSTLLAQGALRPLTRLMFSSKGSTARTAAWAMSNLIKGPDPKAANELITIDGVLNAIIASLEKEDEELATEVAWVVVYLSALSDRGISLIVRSSVPQLLIGRLFSSENLQLLIPVLRGLGNLIAADDYMVDSVLTVGHNIIDQALSGLIKCLKSDNRVLRKESSWALSNIAAGSFEHKKLIFASEATPVLIRLVTSMQFDIRREAAYTLGNLCVVPTGNCELPKIIVEHLVAIVDGGALPGFIHLVRSADVDTAGLGLQFLELVMRGYPNKQGPKLVEMEDGIEAMERFQFHENEQMRNMANGLVDEYFGEDYGLDE.

Positions 1–15 (MADDSASPSPSSASP) are enriched in low complexity. Residues 1–36 (MADDSASPSPSSASPLQHHREALKSSVRNTAASRRR) are disordered. 8 ARM repeats span residues 125-165 (VPLV…NIAA), 167-206 (EPEETKSLLPALPLLIAHLGEKSSTLVAEQCAWAIGNVAG), 209-248 (AELRSTLLAQGALRPLTRLMFSSKGSTARTAAWAMSNLIK), 253-292 (KAANELITIDGVLNAIIASLEKEDEELATEVAWVVVYLSA), 294-335 (SDRG…NLIA), 338-383 (DYMV…NIAA), 386-425 (FEHKKLIFASEATPVLIRLVTSMQFDIRREAAYTLGNLCV), and 438-477 (VEHLVAIVDGGALPGFIHLVRSADVDTAGLGLQFLELVMR).

Belongs to the importin alpha family. In terms of assembly, forms a complex with importin subunit beta-1. The whole complex, most stable and composed of importin alpha, importin beta and NLS substrate, is referred to as PTAC or pore targeting complex. Expressed in root, callus, and etiolated leaf. Low expression in green leaf.

The protein localises to the cytoplasm. The protein resides in the perinuclear region. Functionally, binds specifically and directly to substrates containing either a simple or bipartite NLS motif. Promotes docking of import substrates to the nuclear envelope. The protein is Importin subunit alpha-2 of Oryza sativa subsp. japonica (Rice).